Consider the following 77-residue polypeptide: Large ribosomal subunit protein bL28 (77 aa).

This sequence belongs to the bacterial ribosomal protein bL28 family.

The protein is Large ribosomal subunit protein bL28 of Polaromonas sp. (strain JS666 / ATCC BAA-500).